A 100-amino-acid chain; its full sequence is Integration host factor subunit alpha (100 aa).

Belongs to the bacterial histone-like protein family. In terms of assembly, heterodimer of an alpha and a beta chain.

Functionally, this protein is one of the two subunits of integration host factor, a specific DNA-binding protein that functions in genetic recombination as well as in transcriptional and translational control. The protein is Integration host factor subunit alpha of Methylobacillus flagellatus (strain ATCC 51484 / DSM 6875 / VKM B-1610 / KT).